We begin with the raw amino-acid sequence, 282 residues long: Pyridoxal 5'-phosphate synthase subunit PdxS (282 aa).

Asp-14 provides a ligand contact to D-ribose 5-phosphate. Catalysis depends on Lys-71, which acts as the Schiff-base intermediate with D-ribose 5-phosphate. Residue Gly-143 participates in D-ribose 5-phosphate binding. D-glyceraldehyde 3-phosphate is bound at residue Arg-155. Residues Gly-204 and 225–226 each bind D-ribose 5-phosphate; that span reads GS.

This sequence belongs to the PdxS/SNZ family. In terms of assembly, in the presence of PdxT, forms a dodecamer of heterodimers.

The catalysed reaction is aldehydo-D-ribose 5-phosphate + D-glyceraldehyde 3-phosphate + L-glutamine = pyridoxal 5'-phosphate + L-glutamate + phosphate + 3 H2O + H(+). It functions in the pathway cofactor biosynthesis; pyridoxal 5'-phosphate biosynthesis. Its function is as follows. Catalyzes the formation of pyridoxal 5'-phosphate from ribose 5-phosphate (RBP), glyceraldehyde 3-phosphate (G3P) and ammonia. The ammonia is provided by the PdxT subunit. Can also use ribulose 5-phosphate and dihydroxyacetone phosphate as substrates, resulting from enzyme-catalyzed isomerization of RBP and G3P, respectively. In Treponema denticola (strain ATCC 35405 / DSM 14222 / CIP 103919 / JCM 8153 / KCTC 15104), this protein is Pyridoxal 5'-phosphate synthase subunit PdxS.